Reading from the N-terminus, the 234-residue chain is Leucyl/phenylalanyl-tRNA--protein transferase (234 aa).

The protein belongs to the L/F-transferase family.

It localises to the cytoplasm. The enzyme catalyses N-terminal L-lysyl-[protein] + L-leucyl-tRNA(Leu) = N-terminal L-leucyl-L-lysyl-[protein] + tRNA(Leu) + H(+). It carries out the reaction N-terminal L-arginyl-[protein] + L-leucyl-tRNA(Leu) = N-terminal L-leucyl-L-arginyl-[protein] + tRNA(Leu) + H(+). The catalysed reaction is L-phenylalanyl-tRNA(Phe) + an N-terminal L-alpha-aminoacyl-[protein] = an N-terminal L-phenylalanyl-L-alpha-aminoacyl-[protein] + tRNA(Phe). Its function is as follows. Functions in the N-end rule pathway of protein degradation where it conjugates Leu, Phe and, less efficiently, Met from aminoacyl-tRNAs to the N-termini of proteins containing an N-terminal arginine or lysine. This is Leucyl/phenylalanyl-tRNA--protein transferase from Salmonella gallinarum (strain 287/91 / NCTC 13346).